Here is a 184-residue protein sequence, read N- to C-terminus: Tumor necrosis factor alpha-induced protein 8-like protein 2 (184 aa).

A Phosphoserine modification is found at S3.

This sequence belongs to the TNFAIP8 family. TNFAIP8L2 subfamily. In terms of assembly, may interact with CASP8; however, such result is unclear since could not reproduce the interaction with CASP8. Interacts with RAC1. Phosphorylated by TAK1/MAP3K7; this phosphorylation triggers association with BTRC and subsequent ubiquitination and degradation. Post-translationally, ubiquitinated in a BTRC-depdent manner; leading to degradation mediated through the proteasome pathway.

Its subcellular location is the cytoplasm. It is found in the nucleus. It localises to the lysosome. Its function is as follows. Acts as a negative regulator of innate and adaptive immunity by maintaining immune homeostasis. Plays a regulatory role in the Toll-like signaling pathway by determining the strength of LPS-induced signaling and gene expression. Inhibits TCR-mediated T-cell activation and negatively regulate T-cell function to prevent hyperresponsiveness. Also inhibits autolysosome formation via negatively modulating MTOR activation by interacting with RAC1 and promoting the disassociation of the RAC1-MTOR complex. Plays an essential role in NK-cell biology by acting as a checkpoint and displaying an expression pattern correlating with NK-cell maturation process and by negatively regulating NK-cell maturation and antitumor immunity. Mechanistically, suppresses IL-15-triggered mTOR activity in NK-cells. The sequence is that of Tumor necrosis factor alpha-induced protein 8-like protein 2 (TNFAIP8L2) from Otolemur garnettii (Small-eared galago).